The primary structure comprises 401 residues: S-adenosylmethionine synthase (401 aa).

Residue 135–140 (GHGSGD) coordinates ATP.

Belongs to the AdoMet synthase 2 family. Mg(2+) serves as cofactor.

The catalysed reaction is L-methionine + ATP + H2O = S-adenosyl-L-methionine + phosphate + diphosphate. It participates in amino-acid biosynthesis; S-adenosyl-L-methionine biosynthesis; S-adenosyl-L-methionine from L-methionine: step 1/1. Catalyzes the formation of S-adenosylmethionine from methionine and ATP. This chain is S-adenosylmethionine synthase (mat), found in Methanothermobacter thermautotrophicus (strain ATCC 29096 / DSM 1053 / JCM 10044 / NBRC 100330 / Delta H) (Methanobacterium thermoautotrophicum).